The primary structure comprises 160 residues: Cytochrome b6-f complex subunit 4 (160 aa).

The next 3 membrane-spanning stretches (helical) occupy residues 36 to 56 (LLYIFPVVILGSIACCGGLAV), 95 to 115 (LLGVVLMAAVPAGLIAVPFIE), and 131 to 151 (AVFLFGTFVAIWLGIGATFPI).

The protein belongs to the cytochrome b family. PetD subfamily. In terms of assembly, the 4 large subunits of the cytochrome b6-f complex are cytochrome b6, subunit IV (17 kDa polypeptide, petD), cytochrome f and the Rieske protein, while the 4 small subunits are petG, petL, petM and petN. The complex functions as a dimer.

The protein resides in the plastid. Its subcellular location is the cyanelle thylakoid membrane. In terms of biological role, component of the cytochrome b6-f complex, which mediates electron transfer between photosystem II (PSII) and photosystem I (PSI), cyclic electron flow around PSI, and state transitions. The chain is Cytochrome b6-f complex subunit 4 from Cyanophora paradoxa.